The chain runs to 390 residues: Curcumin synthase 3 (390 aa).

The active site involves C164.

This sequence belongs to the thiolase-like superfamily. Chalcone/stilbene synthases family. Homodimer.

The enzyme catalyses (E)-feruloylacetyl-CoA + (E)-feruloyl-CoA + H2O = curcumin + CO2 + 2 CoA. The catalysed reaction is (E)-feruloylacetyl-CoA + (E)-4-coumaroyl-CoA + H2O = demethoxycurcumin + CO2 + 2 CoA. It catalyses the reaction (4-coumaroyl)acetyl-CoA + 4-coumaroyl-CoA + H2O = bisdemethoxycurcumin + CO2 + 2 CoA. It functions in the pathway secondary metabolite biosynthesis; flavonoid biosynthesis. In terms of biological role, catalyzes the synthesis of curcumin by condensing feruloyl-CoA with a diketide-CoA in the curcuminoid biosynthesis. Also acts as a demethoxycurcumin synthase by accepting 4-coumaroyl-CoA as a starter substrate instead of feruloyl-CoA. In Curcuma longa (Turmeric), this protein is Curcumin synthase 3 (CURS3).